The sequence spans 285 residues: Undecaprenyl-diphosphatase (285 aa).

The next 7 helical transmembrane spans lie at 40–60 (DELLINAASNAGTLLAMLLYF), 92–112 (LCILVATPFALAGAVIYENFI), 122–142 (SVYAVAASTIVFGALLWWADA), 159–179 (FLIGASQLVAVIIPGTSRSGI), 197–217 (FSMLIGAPILAAVSLYGLLGL), 233–253 (LIVAALAFVSGYASIGLLMAL), and 259–279 (FLPFVLYRFALGIALLATSPI).

Belongs to the UppP family.

The protein localises to the cell inner membrane. The catalysed reaction is di-trans,octa-cis-undecaprenyl diphosphate + H2O = di-trans,octa-cis-undecaprenyl phosphate + phosphate + H(+). In terms of biological role, catalyzes the dephosphorylation of undecaprenyl diphosphate (UPP). Confers resistance to bacitracin. This chain is Undecaprenyl-diphosphatase, found in Hyphomonas neptunium (strain ATCC 15444).